A 174-amino-acid chain; its full sequence is Guided entry of tail-anchored proteins factor 1 (174 aa).

Residues 1 to 8 (MSAAEADR) lie on the Lumenal side of the membrane. A helical transmembrane segment spans residues 9–29 (WAWLLVLSFVFGCNVLRILLP). The Cytoplasmic portion of the chain corresponds to 30 to 99 (SFSFFMSRVL…VKARTAQLAK (70 aa)). A coiled-coil region spans residues 39 to 94 (LQKDAEQESQMRAEIQGMKQELSTVNMMDEFARYARLERKINKMTDKLKTHVKART). Residues 39–97 (LQKDAEQESQMRAEIQGMKQELSTVNMMDEFARYARLERKINKMTDKLKTHVKARTAQL) form an interaction with GET3/TRC40 region. A helical transmembrane segment spans residues 100-120 (IKWVISVAFYILQAALMVSLI). The Lumenal portion of the chain corresponds to 121 to 148 (WKYYSVPVAVVPSKWITPLDRLVAFPTR). Residues 149–169 (VAGGVGITCWILVCNKVVAIV) traverse the membrane as a helical segment. Residues 170-174 (LHPFS) lie on the Cytoplasmic side of the membrane.

This sequence belongs to the WRB/GET1 family. Component of the Golgi to ER traffic (GET) complex, which is composed of GET1/WRB, CAMLG/GET2 and GET3. Within the complex, GET1 and CAMLG form a heterotetramer which is stabilized by phosphatidylinositol binding and which binds to the GET3 homodimer. Interacts with CAMLG (via C-terminus). GET3 shows a higher affinity for CAMLG than for GET1.

It localises to the endoplasmic reticulum membrane. Required for the post-translational delivery of tail-anchored (TA) proteins to the endoplasmic reticulum. Together with CAMLG/GET2, acts as a membrane receptor for soluble GET3/TRC40, which recognizes and selectively binds the transmembrane domain of TA proteins in the cytosol. Required to ensure correct topology and ER insertion of CAMLG. In Bos taurus (Bovine), this protein is Guided entry of tail-anchored proteins factor 1.